The following is a 291-amino-acid chain: Polyamine aminopropyltransferase (291 aa).

One can recognise a PABS domain in the interval 5–245 (PGPVSLIEPL…YAVNYIIGSL (241 aa)). Gln-36 contributes to the S-methyl-5'-thioadenosine binding site. Residues His-67 and Glu-91 each coordinate spermidine. S-methyl-5'-thioadenosine contacts are provided by residues Asp-111 and 143-144 (DG). Asp-164 serves as the catalytic Proton acceptor.

Belongs to the spermidine/spermine synthase family. Homodimer or homotetramer.

The protein resides in the cytoplasm. It catalyses the reaction S-adenosyl 3-(methylsulfanyl)propylamine + putrescine = S-methyl-5'-thioadenosine + spermidine + H(+). Its pathway is amine and polyamine biosynthesis; spermidine biosynthesis; spermidine from putrescine: step 1/1. Its function is as follows. Catalyzes the irreversible transfer of a propylamine group from the amino donor S-adenosylmethioninamine (decarboxy-AdoMet) to putrescine (1,4-diaminobutane) to yield spermidine. This chain is Polyamine aminopropyltransferase, found in Pyrobaculum islandicum (strain DSM 4184 / JCM 9189 / GEO3).